The following is a 293-amino-acid chain: Fructose-bisphosphate aldolase (293 aa).

Position 50 (Ser50) interacts with D-glyceraldehyde 3-phosphate. Asp85 serves as the catalytic Proton donor. Residues His86, Asp106, Glu136, and His178 each contribute to the Zn(2+) site. Gly179 provides a ligand contact to dihydroxyacetone phosphate. His208 serves as a coordination point for Zn(2+). Residues 209-211 and 230-233 each bind dihydroxyacetone phosphate; these read GGS and NVNT.

Belongs to the class II fructose-bisphosphate aldolase family. Requires Zn(2+) as cofactor.

It catalyses the reaction beta-D-fructose 1,6-bisphosphate = D-glyceraldehyde 3-phosphate + dihydroxyacetone phosphate. It participates in carbohydrate degradation; glycolysis; D-glyceraldehyde 3-phosphate and glycerone phosphate from D-glucose: step 4/4. Its function is as follows. Catalyzes the aldol condensation of dihydroxyacetone phosphate (DHAP or glycerone-phosphate) with glyceraldehyde 3-phosphate (G3P) to form fructose 1,6-bisphosphate (FBP) in gluconeogenesis and the reverse reaction in glycolysis. The protein is Fructose-bisphosphate aldolase (fba) of Streptococcus pneumoniae serotype 4 (strain ATCC BAA-334 / TIGR4).